We begin with the raw amino-acid sequence, 216 residues long: Octanoyltransferase (216 aa).

One can recognise a BPL/LPL catalytic domain in the interval 33–216 (AATADELWIV…ANRLSTSLSR (184 aa)). Substrate-binding positions include 72–79 (RGGEVTYH), 148–150 (ALG), and 162–164 (GVS). Cys180 functions as the Acyl-thioester intermediate in the catalytic mechanism.

This sequence belongs to the LipB family.

It localises to the cytoplasm. The enzyme catalyses octanoyl-[ACP] + L-lysyl-[protein] = N(6)-octanoyl-L-lysyl-[protein] + holo-[ACP] + H(+). Its pathway is protein modification; protein lipoylation via endogenous pathway; protein N(6)-(lipoyl)lysine from octanoyl-[acyl-carrier-protein]: step 1/2. Catalyzes the transfer of endogenously produced octanoic acid from octanoyl-acyl-carrier-protein onto the lipoyl domains of lipoate-dependent enzymes. Lipoyl-ACP can also act as a substrate although octanoyl-ACP is likely to be the physiological substrate. The chain is Octanoyltransferase from Janthinobacterium sp. (strain Marseille) (Minibacterium massiliensis).